Here is an 86-residue protein sequence, read N- to C-terminus: Small ribosomal subunit protein bS16 (86 aa).

Belongs to the bacterial ribosomal protein bS16 family.

The sequence is that of Small ribosomal subunit protein bS16 from Bordetella avium (strain 197N).